We begin with the raw amino-acid sequence, 249 residues long: tRNA (guanine-N(1)-)-methyltransferase (249 aa).

S-adenosyl-L-methionine contacts are provided by residues Gly116 and 136–141; that span reads IGDYIL.

The protein belongs to the RNA methyltransferase TrmD family. In terms of assembly, homodimer.

It is found in the cytoplasm. It carries out the reaction guanosine(37) in tRNA + S-adenosyl-L-methionine = N(1)-methylguanosine(37) in tRNA + S-adenosyl-L-homocysteine + H(+). Its function is as follows. Specifically methylates guanosine-37 in various tRNAs. The protein is tRNA (guanine-N(1)-)-methyltransferase of Zymomonas mobilis subsp. mobilis (strain ATCC 31821 / ZM4 / CP4).